The following is a 396-amino-acid chain: Elongation factor Tu (396 aa).

The region spanning 10-205 is the tr-type G domain; that stretch reads KSHANIGTIG…AVDEYIPTPE (196 aa). The G1 stretch occupies residues 19-26; sequence GHVDHGKT. 19 to 26 provides a ligand contact to GTP; it reads GHVDHGKT. Residue T26 coordinates Mg(2+). Positions 61-65 are G2; the sequence is GITIS. The G3 stretch occupies residues 82-85; that stretch reads DCPG. GTP is bound by residues 82-86 and 137-140; these read DCPGH and NKCD. The segment at 137–140 is G4; it reads NKCD. Positions 175-177 are G5; sequence SAL.

It belongs to the TRAFAC class translation factor GTPase superfamily. Classic translation factor GTPase family. EF-Tu/EF-1A subfamily. In terms of assembly, monomer.

Its subcellular location is the cytoplasm. It carries out the reaction GTP + H2O = GDP + phosphate + H(+). GTP hydrolase that promotes the GTP-dependent binding of aminoacyl-tRNA to the A-site of ribosomes during protein biosynthesis. This Bacillus velezensis (strain DSM 23117 / BGSC 10A6 / LMG 26770 / FZB42) (Bacillus amyloliquefaciens subsp. plantarum) protein is Elongation factor Tu.